A 194-amino-acid polypeptide reads, in one-letter code: Early growth response protein 1 (194 aa).

3 consecutive C2H2-type zinc fingers follow at residues 1 to 18 (CDRR…IRIH), 24 to 46 (FQCR…IRTH), and 52 to 74 (FACD…TKIH). Residues 66-88 (ERKRHTKIHLRQKDKKVEKAASV) are disordered. The span at 69–79 (RHTKIHLRQKD) shows a compositional bias: basic residues.

This sequence belongs to the EGR C2H2-type zinc-finger protein family.

It is found in the nucleus. It localises to the cytoplasm. Its function is as follows. Transcriptional regulator. Recognizes and binds to the DNA sequence 5'-GCG(T/G)GGGCG-3'(EGR-site) in the promoter region of target genes. Binds double-stranded target DNA, irrespective of the cytosine methylation status. Regulates the transcription of numerous target genes, and thereby plays an important role in regulating the response to growth factors, DNA damage, and ischemia. Plays a role in the regulation of cell survival, proliferation and cell death. Mediates responses to ischemia and hypoxia; regulates the expression of proteins that are involved in inflammatory processes. Plays a role in regulating the expression of circadian clock genes. This chain is Early growth response protein 1 (EGR1), found in Coturnix japonica (Japanese quail).